A 200-amino-acid polypeptide reads, in one-letter code: LexA repressor (200 aa).

A DNA-binding region (H-T-H motif) is located at residues 29–48 (IRDIARAFRITPRGAIVHLN). Active-site for autocatalytic cleavage activity residues include S120 and K158.

Belongs to the peptidase S24 family. Homodimer.

The catalysed reaction is Hydrolysis of Ala-|-Gly bond in repressor LexA.. In terms of biological role, represses a number of genes involved in the response to DNA damage (SOS response), including recA and lexA. In the presence of single-stranded DNA, RecA interacts with LexA causing an autocatalytic cleavage which disrupts the DNA-binding part of LexA, leading to derepression of the SOS regulon and eventually DNA repair. This is LexA repressor from Pseudothermotoga lettingae (strain ATCC BAA-301 / DSM 14385 / NBRC 107922 / TMO) (Thermotoga lettingae).